The primary structure comprises 280 residues: 4-diphosphocytidyl-2-C-methyl-D-erythritol kinase (280 aa).

The active site involves K11. P95–S105 contributes to the ATP binding site. D137 is a catalytic residue.

Belongs to the GHMP kinase family. IspE subfamily.

The catalysed reaction is 4-CDP-2-C-methyl-D-erythritol + ATP = 4-CDP-2-C-methyl-D-erythritol 2-phosphate + ADP + H(+). Its pathway is isoprenoid biosynthesis; isopentenyl diphosphate biosynthesis via DXP pathway; isopentenyl diphosphate from 1-deoxy-D-xylulose 5-phosphate: step 3/6. Catalyzes the phosphorylation of the position 2 hydroxy group of 4-diphosphocytidyl-2C-methyl-D-erythritol. The sequence is that of 4-diphosphocytidyl-2-C-methyl-D-erythritol kinase from Citrifermentans bemidjiense (strain ATCC BAA-1014 / DSM 16622 / JCM 12645 / Bem) (Geobacter bemidjiensis).